The sequence spans 301 residues: Protoheme IX farnesyltransferase (301 aa).

A run of 9 helical transmembrane segments spans residues 16–36, 41–61, 93–113, 114–134, 141–161, 172–192, 217–237, 238–258, and 273–293; these read VVAL…PGMP, IQSG…AAAI, VFAG…VNLI, TAVL…VYLK, IVIG…AVTG, SLLV…LAIF, QILL…ATGM, SGVF…WYAW, and FGYS…DHWL.

This sequence belongs to the UbiA prenyltransferase family. Protoheme IX farnesyltransferase subfamily.

It is found in the cell inner membrane. It catalyses the reaction heme b + (2E,6E)-farnesyl diphosphate + H2O = Fe(II)-heme o + diphosphate. The protein operates within porphyrin-containing compound metabolism; heme O biosynthesis; heme O from protoheme: step 1/1. In terms of biological role, converts heme B (protoheme IX) to heme O by substitution of the vinyl group on carbon 2 of heme B porphyrin ring with a hydroxyethyl farnesyl side group. The chain is Protoheme IX farnesyltransferase from Xylella fastidiosa (strain Temecula1 / ATCC 700964).